We begin with the raw amino-acid sequence, 539 residues long: Neutral amino acid transporter B(0) (539 aa).

M1 carries the post-translational modification N-acetylmethionine. Residues 1–52 (MVADPPKGDPKGYAAAEPTANGVSMLVPIEDVGSLKGGRCGSGDQVRRCLRA) lie on the Cytoplasmic side of the membrane. The helical transmembrane segment at 53-82 (NLLVLLTVVAVVAGVALGLGVSGAGGAFAL) threads the bilayer. The Extracellular portion of the chain corresponds to 83–95 (GPARLEAFSFPGE). A helical transmembrane segment spans residues 96–117 (LLLRLLKMIILPLVVCSLIGGA). Residues 118-131 (ASLDPSALGRLGAW) lie on the Cytoplasmic side of the membrane. Residues 132–154 (ALLFFLVTTLLASALGVGLALAL) form a helical membrane-spanning segment. Residues 155 to 223 (QPGAAFAAIN…GTLVKVPTGG (69 aa)) are Extracellular-facing. 2 N-linked (GlcNAc...) asparagine glycosylation sites follow: N164 and N213. The helical transmembrane segment at 224-247 (EVEGMNILGLVVFAIIFGVALRKL) threads the bilayer. The Cytoplasmic portion of the chain corresponds to 248–256 (GPEGELLIR). Residues 257–284 (FFNSFNDATMVLVSWIMWYAPVGILFLV) traverse the membrane as a helical segment. Topologically, residues 285 to 305 (AGKIVEMENVGLLFASLGKYI) are extracellular. Residues 306-327 (LCCLLGHAIHGLLTLPLIYFLF) traverse the membrane as a helical segment. Residues 328–332 (ARKNP) are Cytoplasmic-facing. Positions 333–363 (YRFLWGIMTPLATAFGTSSSSATLPLMMKCV) form an intramembrane region, discontinuously helical. The Cytoplasmic portion of the chain corresponds to 364–372 (EEKNGVARH). The chain crosses the membrane as a helical span at residues 373-399 (ISRFILPIGATVNMDGAALFQCVAAVF). Positions 381, 383, and 385 each coordinate Na(+). At 400–412 (IAQLNHRSLDFVK) the chain is on the extracellular side. The discontinuously helical intramembrane region spans 413–446 (IITILVTATASSVGAAGIPSGGVLTLAIILEAVN). The Extracellular segment spans residues 447-459 (LPVHDISLILAVD). A helical transmembrane segment spans residues 460-481 (WLVDRSCTVLNVEGDAFGAGLL). 2 residues coordinate Na(+): N470 and D474. Residues 482–539 (QSYLDRTENCNSVPELIQVKSEMPLAALPVPGEEGNPLLKGCPGPAGDADTCEKESVM) lie on the Cytoplasmic side of the membrane. A phosphoserine mark is found at S493, S502, and S537. Residues 518 to 539 (PLLKGCPGPAGDADTCEKESVM) are disordered.

This sequence belongs to the dicarboxylate/amino acid:cation symporter (DAACS) (TC 2.A.23) family. SLC1A5 subfamily. In terms of assembly, homotrimer.

It is found in the cell membrane. It localises to the melanosome. The enzyme catalyses L-glutamine(out) + L-serine(in) + Na(+)(out) = L-glutamine(in) + L-serine(out) + Na(+)(in). It carries out the reaction L-glutamine(in) + L-serine(out) + Na(+)(out) = L-glutamine(out) + L-serine(in) + Na(+)(in). The catalysed reaction is L-threonine(in) + L-glutamine(out) + Na(+)(out) = L-threonine(out) + L-glutamine(in) + Na(+)(in). It catalyses the reaction L-threonine(out) + L-glutamine(in) + Na(+)(out) = L-threonine(in) + L-glutamine(out) + Na(+)(in). The enzyme catalyses L-asparagine(in) + L-glutamine(out) + Na(+)(out) = L-asparagine(out) + L-glutamine(in) + Na(+)(in). It carries out the reaction L-asparagine(out) + L-glutamine(in) + Na(+)(out) = L-asparagine(in) + L-glutamine(out) + Na(+)(in). The catalysed reaction is L-glutamine(in) + L-alanine(out) + Na(+)(out) = L-glutamine(out) + L-alanine(in) + Na(+)(in). It catalyses the reaction L-valine(out) + L-glutamine(in) + Na(+)(out) = L-valine(in) + L-glutamine(out) + Na(+)(in). The enzyme catalyses L-glutamine(in) + L-methionine(out) + Na(+)(out) = L-glutamine(out) + L-methionine(in) + Na(+)(in). It carries out the reaction L-glutamine(in) + L-glutamate(out) + Na(+)(out) + H(+)(out) = L-glutamine(out) + L-glutamate(in) + Na(+)(in) + H(+)(in). The catalysed reaction is D-serine(in) + L-glutamine(out) + Na(+)(out) = D-serine(out) + L-glutamine(in) + Na(+)(in). It catalyses the reaction D-serine(in) + L-alanine(out) + Na(+)(out) = D-serine(out) + L-alanine(in) + Na(+)(in). The enzyme catalyses nitrate(in) = nitrate(out). It carries out the reaction iodide(out) = iodide(in). The catalysed reaction is thiocyanate(in) = thiocyanate(out). Its function is as follows. Sodium-coupled antiporter of neutral amino acids. In a tri-substrate transport cycle, exchanges neutral amino acids between the extracellular and intracellular compartments, coupled to the inward cotransport of at least one sodium ion. The preferred substrate is the essential amino acid L-glutamine, a precursor for biosynthesis of proteins, nucleotides and amine sugars as well as an alternative fuel for mitochondrial oxidative phosphorylation. Exchanges L-glutamine with other neutral amino acids such as L-serine, L-threonine and L-asparagine in a bidirectional way. Provides L-glutamine to proliferating stem and activated cells driving the metabolic switch toward cell differentiation. The transport cycle is usually pH-independent, with the exception of L-glutamate. Transports extracellular L-glutamate coupled to the cotransport of one proton and one sodium ion in exchange for intracellular L-glutamine counter-ion. May provide for L-glutamate uptake in glial cells regulating glutamine/glutamate cycle in the nervous system. Can transport D-amino acids. Mediates D-serine release from the retinal glia potentially affecting NMDA receptor function in retinal neurons. Displays sodium- and amino acid-dependent but uncoupled channel-like anion conductance with a preference SCN(-) &gt;&gt; NO3(-) &gt; I(-) &gt; Cl(-). Through binding of the fusogenic protein syncytin-1/ERVW-1 may mediate trophoblasts syncytialization, the spontaneous fusion of their plasma membranes, an essential process in placental development. This is Neutral amino acid transporter B(0) (SLC1A5) from Bos taurus (Bovine).